Consider the following 346-residue polypeptide: Protein tas (346 aa).

Tyr-53 acts as the Proton donor in catalysis. Residue 234–244 (SCLGFGTLTGK) participates in NADP(+) binding.

Belongs to the aldo/keto reductase family. Aldo/keto reductase 2 subfamily.

The sequence is that of Protein tas (tas) from Escherichia coli (strain K12).